A 551-amino-acid chain; its full sequence is Arginine--tRNA ligase (551 aa).

Residues 123-133 carry the 'HIGH' region motif; that stretch reads ANPTGPLTIGR.

This sequence belongs to the class-I aminoacyl-tRNA synthetase family. Monomer.

The protein resides in the cytoplasm. It carries out the reaction tRNA(Arg) + L-arginine + ATP = L-arginyl-tRNA(Arg) + AMP + diphosphate. The chain is Arginine--tRNA ligase from Chlorobium phaeobacteroides (strain DSM 266 / SMG 266 / 2430).